The primary structure comprises 286 residues: Beta-glucanase (286 aa).

The first 30 residues, 1–30 (MCTMPLMKLKKMMRRTAFLLSVLIGCSMLG), serve as a signal peptide directing secretion. Residues 48 to 286 (FDYSGLPDPE…DYVRVYRWVE (239 aa)) enclose the GH16 domain. The active-site Nucleophile is the Glu158. Catalysis depends on Glu163, which acts as the Proton donor.

The protein belongs to the glycosyl hydrolase 16 family.

It carries out the reaction Hydrolysis of (1-&gt;4)-beta-D-glucosidic linkages in beta-D-glucans containing (1-&gt;3)- and (1-&gt;4)-bonds.. Shows activity on lichenan, beta-glucan and laminarin but not on CMC cellulose or xylan. The polypeptide is Beta-glucanase (bglA) (Rhodothermus marinus (Rhodothermus obamensis)).